Consider the following 322-residue polypeptide: Transmembrane protein 171 (322 aa).

A run of 4 helical transmembrane segments spans residues 22–42, 57–77, 112–132, and 159–179; these read IFFL…LSIF, IVLK…VILA, LIFG…GIWV, and FLSL…FFVV. Residues 223–322 form a disordered region; it reads PPPYFPESSA…LGAPSDASPP (100 aa). Residues 228-241 show a composition bias toward low complexity; the sequence is PESSAAAPSPGANS. 2 stretches are compositionally biased toward polar residues: residues 242 to 267 and 279 to 289; these read LHQI…NQGA and ISGQGSSSERS.

The protein localises to the membrane. This chain is Transmembrane protein 171 (Tmem171), found in Mus musculus (Mouse).